A 251-amino-acid chain; its full sequence is uncharacterized protein (251 aa).

This sequence belongs to the chlamydial CPn_0206/CT_203/TC_0475 family.

This is an uncharacterized protein from Chlamydia trachomatis serovar D (strain ATCC VR-885 / DSM 19411 / UW-3/Cx).